A 395-amino-acid chain; its full sequence is Putative pyridoxal phosphate-dependent acyltransferase (395 aa).

A pyridoxal 5'-phosphate-binding site is contributed by Gly110–Phe111. A substrate-binding site is contributed by His135. Pyridoxal 5'-phosphate contacts are provided by residues Ser185, Asp210–His213, and Thr240–Lys243. Lys243 carries the N6-(pyridoxal phosphate)lysine modification. Thr357 lines the substrate pocket.

The protein belongs to the class-II pyridoxal-phosphate-dependent aminotransferase family. In terms of assembly, homodimer. It depends on pyridoxal 5'-phosphate as a cofactor.

The chain is Putative pyridoxal phosphate-dependent acyltransferase from Staphylococcus aureus (strain COL).